The chain runs to 82 residues: DNA-directed RNA polymerase subunit omega (82 aa).

It belongs to the RNA polymerase subunit omega family. In terms of assembly, the RNAP catalytic core consists of 2 alpha, 1 beta, 1 beta' and 1 omega subunit. When a sigma factor is associated with the core the holoenzyme is formed, which can initiate transcription.

The catalysed reaction is RNA(n) + a ribonucleoside 5'-triphosphate = RNA(n+1) + diphosphate. Promotes RNA polymerase assembly. Latches the N- and C-terminal regions of the beta' subunit thereby facilitating its interaction with the beta and alpha subunits. This Lachnoclostridium phytofermentans (strain ATCC 700394 / DSM 18823 / ISDg) (Clostridium phytofermentans) protein is DNA-directed RNA polymerase subunit omega.